The sequence spans 81 residues: ATP synthase subunit c (81 aa).

2 helical membrane passes run I5–G25 and V57–A77.

It belongs to the ATPase C chain family. As to quaternary structure, F-type ATPases have 2 components, F(1) - the catalytic core - and F(0) - the membrane proton channel. F(1) has five subunits: alpha(3), beta(3), gamma(1), delta(1), epsilon(1). F(0) has three main subunits: a(1), b(2) and c(10-14). The alpha and beta chains form an alternating ring which encloses part of the gamma chain. F(1) is attached to F(0) by a central stalk formed by the gamma and epsilon chains, while a peripheral stalk is formed by the delta and b chains.

The protein resides in the cell membrane. In terms of biological role, f(1)F(0) ATP synthase produces ATP from ADP in the presence of a proton or sodium gradient. F-type ATPases consist of two structural domains, F(1) containing the extramembraneous catalytic core and F(0) containing the membrane proton channel, linked together by a central stalk and a peripheral stalk. During catalysis, ATP synthesis in the catalytic domain of F(1) is coupled via a rotary mechanism of the central stalk subunits to proton translocation. Functionally, key component of the F(0) channel; it plays a direct role in translocation across the membrane. A homomeric c-ring of between 10-14 subunits forms the central stalk rotor element with the F(1) delta and epsilon subunits. This is ATP synthase subunit c from Mycobacterium bovis (strain ATCC BAA-935 / AF2122/97).